A 208-amino-acid polypeptide reads, in one-letter code: Inactive ribonuclease-like protein 10 (208 aa).

An N-terminal signal peptide occupies residues 1 to 24; that stretch reads MKVTLVHLLFMMLLLLLGLGLGLG. Asn125 and Asn147 each carry an N-linked (GlcNAc...) asparagine glycan.

This sequence belongs to the pancreatic ribonuclease family. The N-terminus is blocked. Glycosylated. As to expression, male-specific expression in proximal caput of the epididymis (at protein level).

It localises to the secreted. Secreted proximal epididymal protein required for post-testicular sperm maturation and male fertility. May be involved in sperm adhesion to the egg zona pellucida. Does not have ribonuclease activity. This Mus musculus (Mouse) protein is Inactive ribonuclease-like protein 10 (Rnase10).